We begin with the raw amino-acid sequence, 155 residues long: Peptide deformylase 2 (155 aa).

Residues Cys-90 and His-132 each coordinate Fe cation. Glu-133 is an active-site residue. His-136 serves as a coordination point for Fe cation.

The protein belongs to the polypeptide deformylase family. Fe(2+) is required as a cofactor.

The catalysed reaction is N-terminal N-formyl-L-methionyl-[peptide] + H2O = N-terminal L-methionyl-[peptide] + formate. In terms of biological role, removes the formyl group from the N-terminal Met of newly synthesized proteins. Requires at least a dipeptide for an efficient rate of reaction. N-terminal L-methionine is a prerequisite for activity but the enzyme has broad specificity at other positions. This chain is Peptide deformylase 2, found in Clostridium perfringens (strain 13 / Type A).